Here is a 221-residue protein sequence, read N- to C-terminus: uncharacterized protein (221 aa).

Over 1–45 the chain is Extracellular; the sequence is MYAPIRSPITELNESTPSSIPVATSYATCSASFAKLVALLVDDMA. A helical transmembrane segment spans residues 46-66; it reads GLSIVLSEIYIYFKLLFLIVI. Over 67–221 the chain is Cytoplasmic; it reads TESIQNKLED…KYIVVIKVEQ (155 aa).

It is found in the host membrane. This is an uncharacterized protein from Acidianus filamentous virus 1 (isolate United States/Yellowstone) (AFV-1).